Consider the following 199-residue polypeptide: Large ribosomal subunit protein eL13A (199 aa).

Phosphothreonine is present on residues Thr-144 and Thr-152.

The protein belongs to the eukaryotic ribosomal protein eL13 family. As to quaternary structure, component of the large ribosomal subunit (LSU). Mature yeast ribosomes consist of a small (40S) and a large (60S) subunit. The 40S small subunit contains 1 molecule of ribosomal RNA (18S rRNA) and 33 different proteins (encoded by 57 genes). The large 60S subunit contains 3 rRNA molecules (25S, 5.8S and 5S rRNA) and 46 different proteins (encoded by 81 genes).

It localises to the cytoplasm. Component of the ribosome, a large ribonucleoprotein complex responsible for the synthesis of proteins in the cell. The small ribosomal subunit (SSU) binds messenger RNAs (mRNAs) and translates the encoded message by selecting cognate aminoacyl-transfer RNA (tRNA) molecules. The large subunit (LSU) contains the ribosomal catalytic site termed the peptidyl transferase center (PTC), which catalyzes the formation of peptide bonds, thereby polymerizing the amino acids delivered by tRNAs into a polypeptide chain. The nascent polypeptides leave the ribosome through a tunnel in the LSU and interact with protein factors that function in enzymatic processing, targeting, and the membrane insertion of nascent chains at the exit of the ribosomal tunnel. This Saccharomyces cerevisiae (strain ATCC 204508 / S288c) (Baker's yeast) protein is Large ribosomal subunit protein eL13A.